Consider the following 718-residue polypeptide: Phenylalanine--tRNA ligase beta subunit (718 aa).

The region spanning 39–153 is the tRNA-binding domain; sequence LNEISGIKFG…IFDLESNPLK (115 aa). The B5 domain occupies 386–460; it reads SKKTFLDLNY…RFYGLEKLKD (75 aa). Residues Asp438, Asp444, and Asp448 each contribute to the Mg(2+) site.

This sequence belongs to the phenylalanyl-tRNA synthetase beta subunit family. Type 1 subfamily. In terms of assembly, tetramer of two alpha and two beta subunits. It depends on Mg(2+) as a cofactor.

The protein resides in the cytoplasm. The enzyme catalyses tRNA(Phe) + L-phenylalanine + ATP = L-phenylalanyl-tRNA(Phe) + AMP + diphosphate + H(+). This chain is Phenylalanine--tRNA ligase beta subunit, found in Mesomycoplasma hyopneumoniae (strain 7448) (Mycoplasma hyopneumoniae).